We begin with the raw amino-acid sequence, 481 residues long: Sialic acid-binding Ig-like lectin 16 (481 aa).

The N-terminal stretch at 1–16 (MLLLPLLLPVLGAGSL) is a signal peptide. Topologically, residues 17–434 (NKDPSYSLQV…VHCKSGPMTG (418 aa)) are extracellular. Positions 19–122 (DPSYSLQVQR…DEAWYFFRVE (104 aa)) constitute an Ig-like V-type domain. Disulfide bonds link C37/C174, C42/C102, C165/C216, and C259/C306. N-linked (GlcNAc...) asparagine glycans are attached at residues N43 and N78. Residue R120 coordinates N-acetylneuraminate. Ig-like C2-type domains are found at residues 147 to 232 (PDVY…RTVR), 238 to 322 (LELQ…LDLS), and 327 to 424 (PENL…LSFS). N-linked (GlcNAc...) asparagine glycosylation is found at N338 and N347. A disulfide bridge links C363 with C408. A helical transmembrane segment spans residues 435 to 455 (VVLVAVGEVAMKILLLCLCLI). At 456–481 (LLRVRSCRRKAARAALGMEAADAVTD) the chain is on the cytoplasmic side.

The protein belongs to the immunoglobulin superfamily. SIGLEC (sialic acid binding Ig-like lectin) family. Expressed in bone marrow, fetal brain, fetal liver, lung and salivary gland. Detected in brain, macrophage, cancerous esophagus and lung at protein level.

Its subcellular location is the membrane. In terms of biological role, putative adhesion molecule that mediates sialic-acid dependent binding to cells. This is Sialic acid-binding Ig-like lectin 16 (SIGLEC16) from Homo sapiens (Human).